We begin with the raw amino-acid sequence, 81 residues long: Sulfur carrier protein TusA (81 aa).

Catalysis depends on Cys-19, which acts as the Cysteine persulfide intermediate.

It belongs to the sulfur carrier protein TusA family. In terms of assembly, interacts with IscS.

Its subcellular location is the cytoplasm. Its pathway is tRNA modification. In terms of biological role, sulfur carrier protein involved in sulfur trafficking in the cell. Part of a sulfur-relay system required for 2-thiolation during synthesis of 2-thiouridine of the modified wobble base 5-methylaminomethyl-2-thiouridine (mnm(5)s(2)U) in tRNA. Interacts with IscS and stimulates its cysteine desulfurase activity. Accepts an activated sulfur from IscS, which is then transferred to TusD, and thus determines the direction of sulfur flow from IscS to 2-thiouridine formation. Also appears to be involved in sulfur transfer for the biosynthesis of molybdopterin. This Pectobacterium atrosepticum (strain SCRI 1043 / ATCC BAA-672) (Erwinia carotovora subsp. atroseptica) protein is Sulfur carrier protein TusA.